Reading from the N-terminus, the 476-residue chain is Cysteine--tRNA ligase (476 aa).

Zn(2+) is bound at residue cysteine 28. The short motif at 30–40 (PTVYDHTHLGH) is the 'HIGH' region element. Zn(2+)-binding residues include cysteine 208, histidine 233, and glutamate 237. The 'KMSKS' region motif lies at 265–269 (KMSKS). Lysine 268 lines the ATP pocket.

It belongs to the class-I aminoacyl-tRNA synthetase family. Zn(2+) serves as cofactor.

Its subcellular location is the cytoplasm. It catalyses the reaction tRNA(Cys) + L-cysteine + ATP = L-cysteinyl-tRNA(Cys) + AMP + diphosphate. This Methanococcus maripaludis (strain C7 / ATCC BAA-1331) protein is Cysteine--tRNA ligase.